Reading from the N-terminus, the 287-residue chain is 2-dehydro-3-deoxyphosphooctonate aldolase (287 aa).

The protein belongs to the KdsA family.

It localises to the cytoplasm. The catalysed reaction is D-arabinose 5-phosphate + phosphoenolpyruvate + H2O = 3-deoxy-alpha-D-manno-2-octulosonate-8-phosphate + phosphate. It participates in carbohydrate biosynthesis; 3-deoxy-D-manno-octulosonate biosynthesis; 3-deoxy-D-manno-octulosonate from D-ribulose 5-phosphate: step 2/3. Its pathway is bacterial outer membrane biogenesis; lipopolysaccharide biosynthesis. The chain is 2-dehydro-3-deoxyphosphooctonate aldolase from Bradyrhizobium sp. (strain ORS 278).